The primary structure comprises 154 residues: uncharacterized protein (154 aa).

2 coiled-coil regions span residues 8–48 (DEEV…AIEA) and 89–138 (VQEL…RGLV).

This is an uncharacterized protein from Treponema pallidum (strain Nichols).